A 237-amino-acid chain; its full sequence is Purine nucleoside phosphorylase DeoD-type (237 aa).

An a purine D-ribonucleoside-binding site is contributed by His4. Phosphate contacts are provided by residues Gly20, Arg24, Arg43, and 87-90; that span reads RVGT. A purine D-ribonucleoside is bound by residues 179-181 and 203-204; these read EME and SD. The active-site Proton donor is the Asp204.

It belongs to the PNP/UDP phosphorylase family. Homohexamer; trimer of homodimers.

The enzyme catalyses a purine D-ribonucleoside + phosphate = a purine nucleobase + alpha-D-ribose 1-phosphate. It catalyses the reaction a purine 2'-deoxy-D-ribonucleoside + phosphate = a purine nucleobase + 2-deoxy-alpha-D-ribose 1-phosphate. In terms of biological role, catalyzes the reversible phosphorolytic breakdown of the N-glycosidic bond in the beta-(deoxy)ribonucleoside molecules, with the formation of the corresponding free purine bases and pentose-1-phosphate. The sequence is that of Purine nucleoside phosphorylase DeoD-type from Streptococcus gordonii (strain Challis / ATCC 35105 / BCRC 15272 / CH1 / DL1 / V288).